The chain runs to 372 residues: Embryonic growth/differentiation factor 1 (372 aa).

An N-terminal signal peptide occupies residues 1–29 (MPPPQQGPCGHHLLLLLALLLPSLPLTRA). Residues 30-253 (PVPPGPAAAL…LCHPLARPRR (224 aa)) constitute a propeptide that is removed on maturation. A disordered region spans residues 67–86 (RRRDPQETRSGSRRTSPGVT). N-linked (GlcNAc...) asparagine glycosylation occurs at N206. 3 cysteine pairs are disulfide-bonded: C267–C337, C296–C369, and C300–C371.

It belongs to the TGF-beta family. In terms of assembly, homodimer; disulfide-linked. As to expression, expressed in the brain.

The protein resides in the secreted. In terms of biological role, may mediate cell differentiation events during embryonic development. In Homo sapiens (Human), this protein is Embryonic growth/differentiation factor 1 (GDF1).